Consider the following 1049-residue polypeptide: Carbamoyl phosphate synthase large chain (1049 aa).

The tract at residues 1–399 (MRESVRKVLV…SLQKAVRMLD (399 aa)) is carboxyphosphate synthetic domain. 12 residues coordinate ATP: Arg-127, Arg-167, Gly-173, Gly-174, Lys-206, Leu-208, Glu-213, Gly-239, Val-240, His-241, Gln-282, and Glu-296. The ATP-grasp 1 domain occupies 131 to 325 (RETMINVGLP…LAYVSAKLAL (195 aa)). Residues Gln-282, Glu-296, and Asn-298 each contribute to the Mg(2+) site. Residues Gln-282, Glu-296, and Asn-298 each contribute to the Mn(2+) site. Residues 400–548 (IGEPGVVGGK…LTYNGTEDDI (149 aa)) are oligomerization domain. The segment at 549 to 930 (EFSEAGNKLL…LKSWLSSSPN (382 aa)) is carbamoyl phosphate synthetic domain. An ATP-grasp 2 domain is found at 674 to 864 (SKLLDKLGIK…IISLALDGIL (191 aa)). Residues Arg-710, Lys-749, Leu-751, Glu-756, Gly-780, Val-781, His-782, Ser-783, Gln-823, and Glu-835 each coordinate ATP. Residues Gln-823, Glu-835, and Asn-837 each contribute to the Mg(2+) site. Residues Gln-823, Glu-835, and Asn-837 each contribute to the Mn(2+) site. The MGS-like domain maps to 930 to 1049 (NKIPNKEGIA…YEISEYGAGI (120 aa)). Positions 931-1049 (KIPNKEGIAL…YEISEYGAGI (119 aa)) are allosteric domain.

Belongs to the CarB family. As to quaternary structure, composed of two chains; the small (or glutamine) chain promotes the hydrolysis of glutamine to ammonia, which is used by the large (or ammonia) chain to synthesize carbamoyl phosphate. Tetramer of heterodimers (alpha,beta)4. It depends on Mg(2+) as a cofactor. Mn(2+) is required as a cofactor.

The catalysed reaction is hydrogencarbonate + L-glutamine + 2 ATP + H2O = carbamoyl phosphate + L-glutamate + 2 ADP + phosphate + 2 H(+). It catalyses the reaction hydrogencarbonate + NH4(+) + 2 ATP = carbamoyl phosphate + 2 ADP + phosphate + 2 H(+). Its pathway is amino-acid biosynthesis; L-arginine biosynthesis; carbamoyl phosphate from bicarbonate: step 1/1. It functions in the pathway pyrimidine metabolism; UMP biosynthesis via de novo pathway; (S)-dihydroorotate from bicarbonate: step 1/3. Functionally, large subunit of the glutamine-dependent carbamoyl phosphate synthetase (CPSase). CPSase catalyzes the formation of carbamoyl phosphate from the ammonia moiety of glutamine, carbonate, and phosphate donated by ATP, constituting the first step of 2 biosynthetic pathways, one leading to arginine and/or urea and the other to pyrimidine nucleotides. The large subunit (synthetase) binds the substrates ammonia (free or transferred from glutamine from the small subunit), hydrogencarbonate and ATP and carries out an ATP-coupled ligase reaction, activating hydrogencarbonate by forming carboxy phosphate which reacts with ammonia to form carbamoyl phosphate. This is Carbamoyl phosphate synthase large chain from Sulfurisphaera tokodaii (strain DSM 16993 / JCM 10545 / NBRC 100140 / 7) (Sulfolobus tokodaii).